The primary structure comprises 416 residues: D-amino acid dehydrogenase 2 (416 aa).

5–19 (VCIIGAGVVGLATAY) contributes to the FAD binding site.

This sequence belongs to the DadA oxidoreductase family. The cofactor is FAD.

The catalysed reaction is a D-alpha-amino acid + A + H2O = a 2-oxocarboxylate + AH2 + NH4(+). Its function is as follows. Oxidative deamination of D-amino acids. This is D-amino acid dehydrogenase 2 (dadA2) from Pseudomonas aeruginosa (strain ATCC 15692 / DSM 22644 / CIP 104116 / JCM 14847 / LMG 12228 / 1C / PRS 101 / PAO1).